A 216-amino-acid polypeptide reads, in one-letter code: FMN-dependent NADH:quinone oxidoreductase (216 aa).

FMN-binding positions include Ser10 and 15-17; that span reads SIS.

Belongs to the azoreductase type 1 family. In terms of assembly, homodimer. Requires FMN as cofactor.

It catalyses the reaction 2 a quinone + NADH + H(+) = 2 a 1,4-benzosemiquinone + NAD(+). It carries out the reaction N,N-dimethyl-1,4-phenylenediamine + anthranilate + 2 NAD(+) = 2-(4-dimethylaminophenyl)diazenylbenzoate + 2 NADH + 2 H(+). Functionally, quinone reductase that provides resistance to thiol-specific stress caused by electrophilic quinones. Also exhibits azoreductase activity. Catalyzes the reductive cleavage of the azo bond in aromatic azo compounds to the corresponding amines. The chain is FMN-dependent NADH:quinone oxidoreductase from Nocardia farcinica (strain IFM 10152).